The primary structure comprises 329 residues: Ceramide synthase hyl-2 (329 aa).

The N-linked (GlcNAc...) asparagine glycan is linked to N22. 7 helical membrane passes run 41–61 (VLTGISLIIYRFVFENYIFVP), 95–115 (ALYYTISFVCGLYLVLHESHL), 134–154 (VAWYYWIQGGFYIALVFGILF), 162–182 (FWQMLVHHFITLALIGVSWTM), 187–207 (VGTLILVSHDAVDILIDVGKI), 221–241 (FAGVLFVWVATRLVYYPFWII), and 270–290 (FIMLLLTALLILHIFWAYILF). The 213-residue stretch at 86 to 298 (SRMAECAMRA…LFKIAYDTIQ (213 aa)) folds into the TLC domain.

Belongs to the sphingosine N-acyltransferase family. Strong expression in the gut, the posterior bulb of the pharynx, the hypoderm, and unidentified cells of the head and the tail.

The protein localises to the membrane. The catalysed reaction is a very long-chain fatty acyl-CoA + a sphingoid base = an N-(very-long-chain fatty acyl)-sphingoid base + CoA + H(+). It catalyses the reaction a fatty acyl-CoA + sphinganine = an N-acylsphinganine + CoA + H(+). It carries out the reaction docosanoyl-CoA + sphinganine = N-docosanoylsphinganine + CoA + H(+). The enzyme catalyses sphinganine + tetradecanoyl-CoA = N-(tetradecanoyl)-sphinganine + CoA + H(+). The catalysed reaction is eicosanoyl-CoA + sphinganine = N-eicosanoylsphinganine + CoA + H(+). It catalyses the reaction 15-methylhexadecasphinganine + a fatty acyl-CoA = an N-acyl-15-methylhexadecasphinganine + CoA + H(+). Its pathway is lipid metabolism; sphingolipid metabolism. Functionally, catalyzes the acylation of sphingoid bases to form ceramides, which are key players in cell signaling events such as tolerances to heat, oxidation, and ultraviolet stress. C.elegans contain specific sphingoid bases, which are unique or different in structure compared to the sphingoid bases found in other animals. Two examples of these distinctive compounds are: 15-methylhexadecasphinganine and 15-methylhexadecasphing-4-enine. Exhibits substrate preference for long and very long fatty acyl-coA chains (C20-23). Required for adaptation of the nematode to anoxia. Anoxia tolerance may require one or more of the ceramide species that are either specifically or preferentially synthesized by HYL-2, and seems to be affected by a pathway that is parallel to that involving daf-2. The sequence is that of Ceramide synthase hyl-2 (hyl-2) from Caenorhabditis elegans.